The primary structure comprises 338 residues: N-acetyl-gamma-glutamyl-phosphate reductase (338 aa).

Residue Cys148 is part of the active site.

Belongs to the NAGSA dehydrogenase family. Type 1 subfamily.

The protein localises to the cytoplasm. The enzyme catalyses N-acetyl-L-glutamate 5-semialdehyde + phosphate + NADP(+) = N-acetyl-L-glutamyl 5-phosphate + NADPH + H(+). It participates in amino-acid biosynthesis; L-arginine biosynthesis; N(2)-acetyl-L-ornithine from L-glutamate: step 3/4. Its function is as follows. Catalyzes the NADPH-dependent reduction of N-acetyl-5-glutamyl phosphate to yield N-acetyl-L-glutamate 5-semialdehyde. The sequence is that of N-acetyl-gamma-glutamyl-phosphate reductase from Leptospira interrogans serogroup Icterohaemorrhagiae serovar copenhageni (strain Fiocruz L1-130).